A 120-amino-acid polypeptide reads, in one-letter code: Large ribosomal subunit protein uL18 (120 aa).

The disordered stretch occupies residues 1-22 (MKLTRRESKNRRHRRVRGKVVG). Positions 8-18 (SKNRRHRRVRG) are enriched in basic residues.

The protein belongs to the universal ribosomal protein uL18 family. Part of the 50S ribosomal subunit; part of the 5S rRNA/L5/L18/L25 subcomplex. Contacts the 5S and 23S rRNAs.

In terms of biological role, this is one of the proteins that bind and probably mediate the attachment of the 5S RNA into the large ribosomal subunit, where it forms part of the central protuberance. The protein is Large ribosomal subunit protein uL18 of Nostoc punctiforme (strain ATCC 29133 / PCC 73102).